Reading from the N-terminus, the 272-residue chain is Phytolongin Phyl2.2 (272 aa).

The region spanning 12-116 (CIAKGTVVLA…LINPVSHCLQ (105 aa)) is the Longin domain. A helical; Anchor for type IV membrane protein membrane pass occupies residues 243–263 (WVVLMFDFCICAVLFGIWLWI).

This sequence belongs to the synaptobrevin family.

Its subcellular location is the membrane. Its function is as follows. Non-SNARE longin protein involved in membrane-trafficking machinery. The chain is Phytolongin Phyl2.2 from Arabidopsis thaliana (Mouse-ear cress).